A 217-amino-acid polypeptide reads, in one-letter code: Probable GTP-binding protein EngB (217 aa).

An EngB-type G domain is found at 37–214 (DGVEIAFAGR…RAAMAKLLEE (178 aa)). GTP-binding positions include 45–52 (GRSNVGKS), 72–76 (GRTQE), 92–95 (DMPG), 159–162 (TKAD), and 193–195 (TSS). Mg(2+)-binding residues include Ser52 and Thr74.

The protein belongs to the TRAFAC class TrmE-Era-EngA-EngB-Septin-like GTPase superfamily. EngB GTPase family. Mg(2+) is required as a cofactor.

Its function is as follows. Necessary for normal cell division and for the maintenance of normal septation. The sequence is that of Probable GTP-binding protein EngB from Bradyrhizobium diazoefficiens (strain JCM 10833 / BCRC 13528 / IAM 13628 / NBRC 14792 / USDA 110).